Reading from the N-terminus, the 221-residue chain is Ribosomal RNA small subunit methyltransferase Nep1 (221 aa).

S-adenosyl-L-methionine is bound by residues Gly174, Gly179, and 196 to 201; that span reads IGNVSL.

The protein belongs to the class IV-like SAM-binding methyltransferase superfamily. RNA methyltransferase NEP1 family. In terms of assembly, homodimer.

The catalysed reaction is a pseudouridine in rRNA + S-adenosyl-L-methionine = an N(1)-methylpseudouridine in rRNA + S-adenosyl-L-homocysteine + H(+). Its function is as follows. Methyltransferase involved in ribosomal biogenesis. Specifically catalyzes the N1-methylation of the pseudouridine corresponding to position 914 in M.jannaschii 16S rRNA. This is Ribosomal RNA small subunit methyltransferase Nep1 from Pyrobaculum calidifontis (strain DSM 21063 / JCM 11548 / VA1).